The sequence spans 84 residues: Fulditoxin (84 aa).

An N-terminal signal peptide occupies residues 1 to 21 (MKTLLLTLVVVTIVCLDLGNS). 4 disulfides stabilise this stretch: Cys-24–Cys-41, Cys-34–Cys-59, Cys-63–Cys-71, and Cys-72–Cys-77. His-50 is a Zn(2+) binding site.

It belongs to the three-finger toxin family. Short-chain subfamily. In terms of assembly, homodimer; non-covalently linked. Is able to form a tetramer of dimers in the presence of 2 zinc ions. In terms of tissue distribution, expressed by the venom gland.

Its subcellular location is the secreted. Postsynaptic neurotoxin that produces potent, and completely reversible, postsynaptic neuromuscular blockade, as well as broad spectrum inhibition of human muscle and neuronal nicotinic acetylcholine receptors (nAChRs). Inhibition is potent or moderate, depending on the receptor (alpha-1-beta-1-delta-epsilon/CHRNA1-CHRNB1-CHRND-CHRNE (IC(50)=2.56 uM), alpha-4-beta-2/CHRNA4-CHRNB2 (IC(50)=1.8 uM), alpha-7/CHRNA7 (IC(50)=7 uM), and alpha-3-beta-2/CHRNA3-CHRNB2 (IC(50)=12.6 uM)). Acts as a competitive antagonist of ACh. Binds to chicken muscle-type nicotinic acetylcholine receptor (AChR) with high potency compared with the cloned human receptor. Unlike short-chain alpha-3FTxs that only bind to muscle nAChRs, this toxin utilizes dimerization to expand its pharmacological targets to block neuronal nAChRs. This is Fulditoxin from Micrurus fulvius (Eastern coral snake).